A 451-amino-acid chain; its full sequence is MEGKVIGIHGPVLDLQFTDYTPFERELIKVRDILVECRALLGEGKVRTVALGPTEGIRRGDKATALGKPMTIKVGEQLIGRVLSGIGAPLDQKEEPEGEERSVFNVPPQVTAVLPVSTVLETGIKALDLLAPFPRGGKIGLFGGAGVGKTVLVMELIHNVAIKHRGYSVFAGVGERTREGQELWEEMRESGVMDHLVMIFGQMNEPPGVRAITPYAAATVAEYLRSQYGGEILLFMDNIFRYAQAGMEVSTLLGRMPSAMGYQPTLFSEVAQIEERINSLAEGAITSVQAVYVPADDITDPAPATIFGHLDSSVVLSRALTEVGIYPAVDPLQSSSKMLDPEVVGYNHVQVAGRVKEFLQRYEELKDIIALLGMEELSPEDREVVLRARKIQMFLSQPFFVAEAFSGAPGKYVPLERTVEGFKAIIDGKLDHVPESALYMIGDISEAGVDV.

143–150 (GGAGVGKT) lines the ATP pocket.

This sequence belongs to the ATPase alpha/beta chains family. As to quaternary structure, F-type ATPases have 2 components, CF(1) - the catalytic core - and CF(0) - the membrane proton channel. CF(1) has five subunits: alpha(3), beta(3), gamma(1), delta(1), epsilon(1). CF(0) has three main subunits: a(1), b(2) and c(9-12). The alpha and beta chains form an alternating ring which encloses part of the gamma chain. CF(1) is attached to CF(0) by a central stalk formed by the gamma and epsilon chains, while a peripheral stalk is formed by the delta and b chains.

Its subcellular location is the cell membrane. It carries out the reaction ATP + H2O + 4 H(+)(in) = ADP + phosphate + 5 H(+)(out). In terms of biological role, produces ATP from ADP in the presence of a proton gradient across the membrane. The catalytic sites are hosted primarily by the beta subunits. The protein is ATP synthase subunit beta of Coprothermobacter proteolyticus (strain ATCC 35245 / DSM 5265 / OCM 4 / BT).